Reading from the N-terminus, the 98-residue chain is Large ribosomal subunit protein uL23 (98 aa).

It belongs to the universal ribosomal protein uL23 family. In terms of assembly, part of the 50S ribosomal subunit. Contacts protein L29, and trigger factor when it is bound to the ribosome.

In terms of biological role, one of the early assembly proteins it binds 23S rRNA. One of the proteins that surrounds the polypeptide exit tunnel on the outside of the ribosome. Forms the main docking site for trigger factor binding to the ribosome. The chain is Large ribosomal subunit protein uL23 from Cereibacter sphaeroides (strain ATCC 17029 / ATH 2.4.9) (Rhodobacter sphaeroides).